We begin with the raw amino-acid sequence, 126 residues long: Autophagy protein 16 (126 aa).

Positions 32–109 form a coiled coil; that stretch reads DNEEDNEDQL…QAEYDTLIER (78 aa).

The protein belongs to the ATG16 family. Homodimer. Part of the ATG5-ATG12/ATG16 complex. Several units of each may be present in this complex.

The protein resides in the preautophagosomal structure membrane. Its function is as follows. Stabilizes the ATG5-ATG12 conjugate which is necessary for autophagy. The ATG5-ATG12/ATG16 complex is required for efficient promotion of ATG8-conjugation to phosphatidylethanolamine and ATG8 localization to the pre-autophagosomal structure (PAS). Also recruits ATG3 to the PAS. Involved in endoplasmic reticulum-specific autophagic process and is essential for the survival of cells subjected to severe ER stress. This Kluyveromyces lactis (strain ATCC 8585 / CBS 2359 / DSM 70799 / NBRC 1267 / NRRL Y-1140 / WM37) (Yeast) protein is Autophagy protein 16 (ATG16).